A 275-amino-acid polypeptide reads, in one-letter code: Large ribosomal subunit protein uL2 (275 aa).

Residues 221-275 (RGMTMNPVDHPMGGGEGRSKGHIPQSPWGIPAKGYKTRKSKKPSDKLIVKRRKQK) are disordered.

Belongs to the universal ribosomal protein uL2 family. Part of the 50S ribosomal subunit. Forms a bridge to the 30S subunit in the 70S ribosome.

In terms of biological role, one of the primary rRNA binding proteins. Required for association of the 30S and 50S subunits to form the 70S ribosome, for tRNA binding and peptide bond formation. It has been suggested to have peptidyltransferase activity; this is somewhat controversial. Makes several contacts with the 16S rRNA in the 70S ribosome. This Kosmotoga olearia (strain ATCC BAA-1733 / DSM 21960 / TBF 19.5.1) protein is Large ribosomal subunit protein uL2.